The primary structure comprises 126 residues: Holo-[acyl-carrier-protein] synthase (126 aa).

Mg(2+) contacts are provided by Asp9 and Glu58.

The protein belongs to the P-Pant transferase superfamily. AcpS family. It depends on Mg(2+) as a cofactor.

The protein localises to the cytoplasm. It carries out the reaction apo-[ACP] + CoA = holo-[ACP] + adenosine 3',5'-bisphosphate + H(+). Functionally, transfers the 4'-phosphopantetheine moiety from coenzyme A to a Ser of acyl-carrier-protein. This is Holo-[acyl-carrier-protein] synthase from Vibrio parahaemolyticus serotype O3:K6 (strain RIMD 2210633).